Reading from the N-terminus, the 359-residue chain is 3-dehydroquinate synthase (359 aa).

NAD(+) is bound by residues 71-76 (DGEAYK), 105-109 (GVVGD), 129-130 (TT), K142, and K151. Zn(2+)-binding residues include E184, H247, and H264.

Belongs to the sugar phosphate cyclases superfamily. Dehydroquinate synthase family. Co(2+) is required as a cofactor. Requires Zn(2+) as cofactor. It depends on NAD(+) as a cofactor.

The protein resides in the cytoplasm. It carries out the reaction 7-phospho-2-dehydro-3-deoxy-D-arabino-heptonate = 3-dehydroquinate + phosphate. Its pathway is metabolic intermediate biosynthesis; chorismate biosynthesis; chorismate from D-erythrose 4-phosphate and phosphoenolpyruvate: step 2/7. Catalyzes the conversion of 3-deoxy-D-arabino-heptulosonate 7-phosphate (DAHP) to dehydroquinate (DHQ). The protein is 3-dehydroquinate synthase of Burkholderia cenocepacia (strain HI2424).